Here is a 236-residue protein sequence, read N- to C-terminus: Glucosamine-6-phosphate deaminase (236 aa).

Residue Asp62 is the Proton acceptor; for enolization step of the active site. Asn128 acts as the For ring-opening step in catalysis. His130 acts as the Proton acceptor; for ring-opening step in catalysis. Residue Glu135 is the For ring-opening step of the active site.

It belongs to the glucosamine/galactosamine-6-phosphate isomerase family. NagB subfamily.

The catalysed reaction is alpha-D-glucosamine 6-phosphate + H2O = beta-D-fructose 6-phosphate + NH4(+). It functions in the pathway amino-sugar metabolism; N-acetylneuraminate degradation; D-fructose 6-phosphate from N-acetylneuraminate: step 5/5. Functionally, catalyzes the reversible isomerization-deamination of glucosamine 6-phosphate (GlcN6P) to form fructose 6-phosphate (Fru6P) and ammonium ion. This chain is Glucosamine-6-phosphate deaminase, found in Oenococcus oeni (strain ATCC BAA-331 / PSU-1).